The following is a 448-amino-acid chain: Trigger factor (448 aa).

The PPIase FKBP-type domain maps to 162–243 (DDFAIIDIEA…VQQTKERKLP (82 aa)). The interval 426–448 (DEGKAVDPSEYFGEEEESAEESE) is disordered. Positions 437-448 (FGEEEESAEESE) are enriched in acidic residues.

It belongs to the FKBP-type PPIase family. Tig subfamily.

Its subcellular location is the cytoplasm. It carries out the reaction [protein]-peptidylproline (omega=180) = [protein]-peptidylproline (omega=0). Functionally, involved in protein export. Acts as a chaperone by maintaining the newly synthesized protein in an open conformation. Functions as a peptidyl-prolyl cis-trans isomerase. This chain is Trigger factor, found in Corynebacterium diphtheriae (strain ATCC 700971 / NCTC 13129 / Biotype gravis).